The following is an 81-amino-acid chain: Dermaseptin-S6 (81 aa).

The first 22 residues, Met-1–Ser-22, serve as a signal peptide directing secretion. The tract at residues Ser-22–Ser-49 is disordered. The propeptide occupies Glu-23–Arg-45. The span at Glu-30–Ser-41 shows a compositional bias: acidic residues. The residue at position 78 (Ile-78) is an Isoleucine amide. The propeptide occupies Glu-80–Gln-81.

Belongs to the frog skin active peptide (FSAP) family. Dermaseptin subfamily. Expressed by the skin glands.

It is found in the secreted. Functionally, antimicrobial peptide. This chain is Dermaseptin-S6, found in Phyllomedusa sauvagei (Sauvage's leaf frog).